Consider the following 278-residue polypeptide: uncharacterized protein (278 aa).

A signal peptide spans 1–32 (MSSASFTTKALSVLAALTAASAPLVAASPAHA). Residues 33 to 236 (LANARNVTGS…HAEWIAYYTG (204 aa)) form the Peptidase S1 domain. A disulfide bridge links Cys59 with Cys75. Active-site charge relay system residues include His74, Asp123, and Ser189.

This sequence belongs to the peptidase S1 family.

It localises to the secreted. This is an uncharacterized protein from Corynebacterium glutamicum (strain R).